The chain runs to 129 residues: Small ribosomal subunit protein uS8 (129 aa).

This sequence belongs to the universal ribosomal protein uS8 family. Part of the 30S ribosomal subunit. Contacts proteins S5 and S12.

Functionally, one of the primary rRNA binding proteins, it binds directly to 16S rRNA central domain where it helps coordinate assembly of the platform of the 30S subunit. This is Small ribosomal subunit protein uS8 from Mycoplasma capricolum subsp. capricolum (strain California kid / ATCC 27343 / NCTC 10154).